Consider the following 219-residue polypeptide: Cysteine dioxygenase (219 aa).

Fe cation contacts are provided by histidine 106, histidine 108, and histidine 166. Residues 113-183 (CVMKILHGSL…NDFAISLHLY (71 aa)) constitute a cross-link (3'-(S-cysteinyl)-tyrosine (Cys-Tyr)).

The protein belongs to the cysteine dioxygenase family. It depends on Fe cation as a cofactor. Post-translationally, the thioether cross-link between Cys-113 and Tyr-183 plays a structural role through stabilizing the Fe(2+) ion, and prevents the production of highly damaging free hydroxyl radicals by holding the oxygen radical via hydroxyl hydrogen.

The enzyme catalyses L-cysteine + O2 = 3-sulfino-L-alanine + H(+). Its function is as follows. Cysteine dioxygenase involved in sulfite formation from cysteine. Required for keratin degradation and plays an important role in filamentous growth and virulence. This Arthroderma benhamiae (Trichophyton mentagrophytes) protein is Cysteine dioxygenase.